The chain runs to 840 residues: Phosphatidylinositol-3-phosphatase myotubularin-1 (840 aa).

The disordered stretch occupies residues 1 to 28 (MTPPRPPSGRVRSLRDYSSESEKMDGTG). Positions 13–25 (SLRDYSSESEKMD) are enriched in basic and acidic residues. In terms of domain architecture, GRAM spans 45 to 112 (GSFSNLSCLL…ATIEKFNKMV (68 aa)). Positions 199–650 (GKSSIRASMD…LAPTLWPQFH (452 aa)) constitute a Myotubularin phosphatase domain. Substrate is bound by residues 332–335 (NGAM), 357–358 (NI), 443–449 (CSDGWDR), and Arg489. Residue Cys443 is the Phosphocysteine intermediate of the active site. Residues 506-535 (QSSSAGSFPSSPVRQSSGSAASQSSSSSHG) are disordered. Low complexity predominate over residues 507-535 (SSSAGSFPSSPVRQSSGSAASQSSSSSHG). Positions 666–734 (VQCRAMTVKY…AALTRAVQSL (69 aa)) form a coiled coil. Residues 745-771 (VEDDPRSSLENNPRRRNRHGNNSDVSV) are disordered.

Belongs to the protein-tyrosine phosphatase family. Non-receptor class myotubularin subfamily. Mostly expressed in siliques and leaves (including hydathodes), and, to a lower extent, in flowers and roots.

It localises to the cytoplasm. The protein resides in the endosome membrane. It catalyses the reaction a 1,2-diacyl-sn-glycero-3-phospho-(1D-myo-inositol-3-phosphate) + H2O = a 1,2-diacyl-sn-glycero-3-phospho-(1D-myo-inositol) + phosphate. The enzyme catalyses a 1,2-diacyl-sn-glycero-3-phospho-(1D-myo-inositol-3,5-bisphosphate) + H2O = a 1,2-diacyl-sn-glycero-3-phospho-(1D-myo-inositol-5-phosphate) + phosphate. In terms of biological role, phosphatase with phosphoinositide 3'-phosphatase activity that can use phosphatidylinositol-3-phosphate (PtdIns3P) and phosphatidylinositol-3,5-diphosphate (PtdIns3,5P(2)) as substrates and produces phosphatidylinositol-5-phosphate (PtdIns5P); participates in pathway(s) that transfer gene regulatory signals to the nucleus. Required for recovery after water deprivation, via the accumulation of PtdIns5P upon dehydration; high PtdIns5P levels mediate ATX1 cytoplasmic localization, thus down-regulating the expression of ATX1-dependent genes. Confers sensitivity to soil-water-deficit stress. In Arabidopsis thaliana (Mouse-ear cress), this protein is Phosphatidylinositol-3-phosphatase myotubularin-1 (MTM1).